We begin with the raw amino-acid sequence, 1550 residues long: Pentafunctional AROM polypeptide (1550 aa).

The tract at residues 1–379 (MSIERVPILG…YQLKAHQVSK (379 aa)) is 3-dehydroquinate synthase. NAD(+) contacts are provided by residues 42-44 (DTN), 80-83 (ENNK), 111-113 (GGV), and Asp116. Arg127 lines the 7-phospho-2-dehydro-3-deoxy-D-arabino-heptonate pocket. NAD(+) is bound at residue 136 to 137 (TT). 7-phospho-2-dehydro-3-deoxy-D-arabino-heptonate is bound by residues Asp143 and Lys149. Lys158 lines the NAD(+) pocket. 7-phospho-2-dehydro-3-deoxy-D-arabino-heptonate is bound at residue Asn159. Residues 176-179 (FLET) and Asn187 contribute to the NAD(+) site. Glu191 serves as a coordination point for Zn(2+). Residues 191 to 194 (EVVK) and Lys243 contribute to the 7-phospho-2-dehydro-3-deoxy-D-arabino-heptonate site. The active-site Proton acceptor; for 3-dehydroquinate synthase activity is Glu253. 7-phospho-2-dehydro-3-deoxy-D-arabino-heptonate contacts are provided by residues 257 to 261 (RNLLN) and His264. His264 contributes to the Zn(2+) binding site. Catalysis depends on His268, which acts as the Proton acceptor; for 3-dehydroquinate synthase activity. 7-phospho-2-dehydro-3-deoxy-D-arabino-heptonate-binding residues include His280 and Lys351. A Zn(2+)-binding site is contributed by His280. The tract at residues 392 to 837 (VHPFTNPPKE…WDILHSKFKI (446 aa)) is EPSP synthase. The tract at residues 857-1047 (DKGVIVIGMR…VPTGRSTAVV (191 aa)) is shikimate kinase. 864-871 (GMRGTGKS) is a binding site for ATP. A 3-dehydroquinase region spans residues 1048-1257 (LTLPDLNNVA…NDDGLLTIGE (210 aa)). Arg1193 (schiff-base intermediate with substrate; for 3-dehydroquinate dehydratase activity) is an active-site residue. Residues 1270–1550 (AKKFWVIGSP…EIIHRAVVEE (281 aa)) are shikimate dehydrogenase.

The protein in the N-terminal section; belongs to the sugar phosphate cyclases superfamily. Dehydroquinate synthase family. In the 2nd section; belongs to the EPSP synthase family. It in the 3rd section; belongs to the shikimate kinase family. This sequence in the 4th section; belongs to the type-I 3-dehydroquinase family. The protein in the C-terminal section; belongs to the shikimate dehydrogenase family. In terms of assembly, homodimer. The cofactor is Zn(2+).

It localises to the cytoplasm. The catalysed reaction is 7-phospho-2-dehydro-3-deoxy-D-arabino-heptonate = 3-dehydroquinate + phosphate. It carries out the reaction 3-dehydroquinate = 3-dehydroshikimate + H2O. It catalyses the reaction shikimate + NADP(+) = 3-dehydroshikimate + NADPH + H(+). The enzyme catalyses shikimate + ATP = 3-phosphoshikimate + ADP + H(+). The catalysed reaction is 3-phosphoshikimate + phosphoenolpyruvate = 5-O-(1-carboxyvinyl)-3-phosphoshikimate + phosphate. It participates in metabolic intermediate biosynthesis; chorismate biosynthesis; chorismate from D-erythrose 4-phosphate and phosphoenolpyruvate: step 2/7. Its pathway is metabolic intermediate biosynthesis; chorismate biosynthesis; chorismate from D-erythrose 4-phosphate and phosphoenolpyruvate: step 3/7. The protein operates within metabolic intermediate biosynthesis; chorismate biosynthesis; chorismate from D-erythrose 4-phosphate and phosphoenolpyruvate: step 4/7. It functions in the pathway metabolic intermediate biosynthesis; chorismate biosynthesis; chorismate from D-erythrose 4-phosphate and phosphoenolpyruvate: step 5/7. It participates in metabolic intermediate biosynthesis; chorismate biosynthesis; chorismate from D-erythrose 4-phosphate and phosphoenolpyruvate: step 6/7. The AROM polypeptide catalyzes 5 consecutive enzymatic reactions in prechorismate polyaromatic amino acid biosynthesis. This Candida dubliniensis (strain CD36 / ATCC MYA-646 / CBS 7987 / NCPF 3949 / NRRL Y-17841) (Yeast) protein is Pentafunctional AROM polypeptide.